The chain runs to 94 residues: MARVTVEDAVNQIGNRFDMILVAARRARQIAVQGKDPMVEEENDKPTVIALREIELGLVTADTLDADERQTVREREAAEIAAVAAIAEGRNNVI.

This sequence belongs to the RNA polymerase subunit omega family. The RNAP catalytic core consists of 2 alpha, 1 beta, 1 beta' and 1 omega subunit. When a sigma factor is associated with the core the holoenzyme is formed, which can initiate transcription.

It carries out the reaction RNA(n) + a ribonucleoside 5'-triphosphate = RNA(n+1) + diphosphate. Functionally, promotes RNA polymerase assembly. Latches the N- and C-terminal regions of the beta' subunit thereby facilitating its interaction with the beta and alpha subunits. The chain is DNA-directed RNA polymerase subunit omega from Shewanella pealeana (strain ATCC 700345 / ANG-SQ1).